We begin with the raw amino-acid sequence, 114 residues long: Non-specific lipid-transfer protein 2 (114 aa).

The N-terminal stretch at 1-23 is a signal peptide; it reads MEMVNKIACFVLLCMVVVAPHAE. Disulfide bonds link C27–C73, C37–C50, C51–C96, and C71–C110.

The protein belongs to the plant LTP family.

In terms of biological role, plant non-specific lipid-transfer proteins transfer phospholipids as well as galactolipids across membranes. May play a role in wax or cutin deposition in the cell walls of expanding epidermal cells and certain secretory tissues. In Solanum chilense (Tomato), this protein is Non-specific lipid-transfer protein 2.